Consider the following 156-residue polypeptide: Cyclic pyranopterin monophosphate synthase (156 aa).

Substrate-binding positions include 73–75 (LCH) and 110–111 (ME). The active site involves Asp125.

This sequence belongs to the MoaC family. In terms of assembly, homohexamer; trimer of dimers.

It carries out the reaction (8S)-3',8-cyclo-7,8-dihydroguanosine 5'-triphosphate = cyclic pyranopterin phosphate + diphosphate. It participates in cofactor biosynthesis; molybdopterin biosynthesis. Catalyzes the conversion of (8S)-3',8-cyclo-7,8-dihydroguanosine 5'-triphosphate to cyclic pyranopterin monophosphate (cPMP). This chain is Cyclic pyranopterin monophosphate synthase, found in Pseudomonas putida (strain GB-1).